A 310-amino-acid chain; its full sequence is ADP-L-glycero-D-manno-heptose-6-epimerase (310 aa).

NADP(+) contacts are provided by residues Phe-10 to Ile-11, Asp-31 to Asn-32, Lys-38, Lys-53, Glu-75 to Ser-79, and Asn-92. Residue Tyr-140 is the Proton acceptor of the active site. Lys-144 is a binding site for NADP(+). Asn-169 serves as a coordination point for substrate. Residues Val-170 and Lys-178 each contribute to the NADP(+) site. The active-site Proton acceptor is Lys-178. Substrate-binding positions include Ser-180, His-187, Phe-201–Ser-204, and Arg-209. At Lys-267 the chain carries N6-acetyllysine. Residue Tyr-272 participates in substrate binding.

Belongs to the NAD(P)-dependent epimerase/dehydratase family. HldD subfamily. In terms of assembly, homopentamer. It depends on NADP(+) as a cofactor.

The catalysed reaction is ADP-D-glycero-beta-D-manno-heptose = ADP-L-glycero-beta-D-manno-heptose. The protein operates within nucleotide-sugar biosynthesis; ADP-L-glycero-beta-D-manno-heptose biosynthesis; ADP-L-glycero-beta-D-manno-heptose from D-glycero-beta-D-manno-heptose 7-phosphate: step 4/4. In terms of biological role, catalyzes the interconversion between ADP-D-glycero-beta-D-manno-heptose and ADP-L-glycero-beta-D-manno-heptose via an epimerization at carbon 6 of the heptose. This Shigella boydii serotype 18 (strain CDC 3083-94 / BS512) protein is ADP-L-glycero-D-manno-heptose-6-epimerase.